A 359-amino-acid polypeptide reads, in one-letter code: MNIYDQLQAVEDRYEELGELLSDPDVVSDTKRFMELSKEEASNRDTVIAYREYKQVLQNIVDAEEMIKESGGDADLEEMAKQELKDAKAEKEEYEEKLKILLLPKDPNDDKNIILEIRGAAGGDEAALFAGDLLTMYQKYAEAQGWRFEVMEASMNGVGGFKEVVAMVSGQSVYSKLKYESGAHRVQRVPVTESQGRVHTSTATVLVMLEVEEVEYDIDPKDLRVDIYHASGAGGQNVNKVATAVRIVHLPTNIKVEMQEERTQQKNREKAMKIIRARVADHFAQIAQDEQDAERKSTIGTGDRSERIRTYNFPQNRVTDHRIGLTLQKLDTILSGKLDEVVDALVLYDQTQKLEELNK.

Gln236 bears the N5-methylglutamine mark.

This sequence belongs to the prokaryotic/mitochondrial release factor family. Methylated by PrmC. Methylation increases the termination efficiency of RF1.

It localises to the cytoplasm. Functionally, peptide chain release factor 1 directs the termination of translation in response to the peptide chain termination codons UAG and UAA. The sequence is that of Peptide chain release factor 1 from Streptococcus pneumoniae (strain Taiwan19F-14).